Consider the following 200-residue polypeptide: Nucleoplasmin (200 aa).

The residue at position 2 (alanine 2) is an N-acetylalanine. Residue serine 3 is modified to Phosphoserine. Threonine 4 carries the post-translational modification Phosphothreonine. A Phosphoserine modification is found at serine 6. Position 8 is a phosphothreonine (threonine 8). An acidic tract A1 region spans residues 35 to 39 (EDDEE). A compositionally biased stretch (acidic residues) spans 123 to 148 (DYSWAEEEDEGEAEGEEEEEEEEDQE). The tract at residues 123–200 (DYSWAEEEDE…GRGRKPAAKK (78 aa)) is disordered. Positions 128-148 (EEEDEGEAEGEEEEEEEEDQE) are acidic tract A2. A Phosphoserine modification is found at serine 149. Positions 153-170 (AVKRPAATKKAGQAKKKK) are enriched in basic residues. A Bipartite nuclear localization signal motif is present at residues 155–170 (KRPAATKKAGQAKKKK). The segment at 174–176 (EDE) is acidic tract A3. Residues serine 177, serine 178, and serine 182 each carry the phosphoserine modification. Residues 185–200 (KKGKGAGRGRKPAAKK) are compositionally biased toward basic residues. Omega-N-methylarginine; by PRMT5; alternate is present on arginine 192. Arginine 192 bears the Symmetric dimethylarginine; by PRMT5; alternate mark.

Belongs to the nucleoplasmin family. Homopentamer, when bound to H2A-H2B dimers only. Homodecamer of two stacked pentamers, when bound to H2A-H2B dimers and H3-H4 tetramers simultaneously. Interacts with the heterotetramer formed by wdr77 and prmt5. In terms of processing, activated by phosphorylation of multiple serine/threonine residues, along both core and tail domains. The level of phosphorylation gradually increases during egg maturation, reaching an average of 7-10 phosphates per monomer, so that at the time of fertilization the activity of the protein is maximum. Post-translationally, methylated by prmt5, yielding both monomethylated and symmetrically dimethylated Arg-192.

The protein resides in the nucleus. Functionally, acts as a chaperone for histones, such as histone H2A-H2B, and thus regulates the assembly of nucleosome cores. Involved in chromatin remodeling, especially during fertilization and early embryonic development. May be involved in sperm chromatin decondensation during fertilization. This is Nucleoplasmin from Xenopus laevis (African clawed frog).